Here is a 157-residue protein sequence, read N- to C-terminus: Protein MG115 (157 aa).

The protein belongs to the CinA family.

In Mycoplasma genitalium (strain ATCC 33530 / DSM 19775 / NCTC 10195 / G37) (Mycoplasmoides genitalium), this protein is Protein MG115.